A 182-amino-acid polypeptide reads, in one-letter code: Testis-expressed protein 29 (182 aa).

At Met1–Pro56 the chain is on the extracellular side. Residues Ile57–Ile77 form a helical membrane-spanning segment. Residues Ile78–Pro182 are Cytoplasmic-facing. Positions Leu91–Pro182 are disordered. The segment covering Arg115–Ala170 has biased composition (low complexity). Pro residues predominate over residues Thr171–Pro182.

The protein localises to the membrane. This is Testis-expressed protein 29 (Tex29) from Rattus norvegicus (Rat).